Reading from the N-terminus, the 251-residue chain is Hydroxyacylglutathione hydrolase (251 aa).

Zn(2+)-binding residues include His53, His55, Asp57, His58, His110, Asp127, and His165.

The protein belongs to the metallo-beta-lactamase superfamily. Glyoxalase II family. As to quaternary structure, monomer. Zn(2+) serves as cofactor.

It carries out the reaction an S-(2-hydroxyacyl)glutathione + H2O = a 2-hydroxy carboxylate + glutathione + H(+). The protein operates within secondary metabolite metabolism; methylglyoxal degradation; (R)-lactate from methylglyoxal: step 2/2. Thiolesterase that catalyzes the hydrolysis of S-D-lactoyl-glutathione to form glutathione and D-lactic acid. The polypeptide is Hydroxyacylglutathione hydrolase (Escherichia coli (strain UTI89 / UPEC)).